The chain runs to 380 residues: Chaperone protein DnaJ (380 aa).

Positions 5–70 constitute a J domain; that stretch reads DYYEILGVTK…QKRAAYDRFG (66 aa). The CR-type zinc finger occupies 137–215; it reads GKAETIKIPT…CQGAGRVNRE (79 aa). The Zn(2+) site is built by cysteine 150, cysteine 153, cysteine 167, cysteine 170, cysteine 189, cysteine 192, cysteine 203, and cysteine 206. 4 CXXCXGXG motif repeats span residues 150-157, 167-174, 189-196, and 203-210; these read CEVCDGSG, CPTCAGYG, CPNCHGRG, and CTACQGAG.

This sequence belongs to the DnaJ family. Homodimer. The cofactor is Zn(2+).

It localises to the cytoplasm. Participates actively in the response to hyperosmotic and heat shock by preventing the aggregation of stress-denatured proteins and by disaggregating proteins, also in an autonomous, DnaK-independent fashion. Unfolded proteins bind initially to DnaJ; upon interaction with the DnaJ-bound protein, DnaK hydrolyzes its bound ATP, resulting in the formation of a stable complex. GrpE releases ADP from DnaK; ATP binding to DnaK triggers the release of the substrate protein, thus completing the reaction cycle. Several rounds of ATP-dependent interactions between DnaJ, DnaK and GrpE are required for fully efficient folding. Also involved, together with DnaK and GrpE, in the DNA replication of plasmids through activation of initiation proteins. The protein is Chaperone protein DnaJ of Methylobacterium radiotolerans (strain ATCC 27329 / DSM 1819 / JCM 2831 / NBRC 15690 / NCIMB 10815 / 0-1).